The primary structure comprises 487 residues: Cyclic AMP-dependent transcription factor ATF-2 (487 aa).

The C2H2-type zinc finger occupies 7–31; that stretch reads FLCTAPGCGQRFTNEDHLAVHKHKH. T34 is modified (phosphothreonine; by PKC/PRKCH). A Phosphoserine; by VRK1 modification is found at S44. 2 positions are modified to phosphothreonine: T51 and T53. T55 carries the post-translational modification Phosphothreonine; by VRK1. Phosphoserine occurs at positions 72 and 94. T98 is subject to Phosphothreonine. Residue S103 is modified to Phosphoserine; by PKC/PRKCA and PKC/PRKCB. 2 disordered regions span residues 107 to 130 and 241 to 355; these read EPSVVETTHQDSPLPHPESTTNDE and PGIP…RQKR. S118 carries the phosphoserine modification. Residues 264 to 275 are compositionally biased toward polar residues; it reads LTQQHPPVTNGD. An essential for its histone acetyltransferase activity region spans residues 278-281; it reads KGHG. Over residues 300-316 the composition is skewed to low complexity; it reads PATSTTETPASPAHTTP. The residue at position 310 (S310) is a Phosphoserine. S322 is modified (phosphoserine; by PKC/PRKCA and PKC/PRKCB). Over residues 328–345 the composition is skewed to basic and acidic residues; it reads AANEDPDEKRRKFLERNR. Positions 334–397 constitute a bZIP domain; sequence DEKRRKFLER…AQLKQLLLAH (64 aa). A basic motif region spans residues 336–356; that stretch reads KRRKFLERNRAAASRCRQKRK. K339 is modified (N6-acetyllysine). S349 bears the Phosphoserine; by PKC/PRKCA and PKC/PRKCB mark. N6-acetyllysine is present on K356. Positions 362–390 are leucine-zipper; that stretch reads LEKKAEDLSSLNGQLQSEVTLLRNEVAQL. The Nuclear export signal motif lies at 387-396; the sequence is VAQLKQLLLA. The segment at 407–487 is disordered; it reads KKSGYHTADK…PSSQAQPSGS (81 aa). Phosphoserine occurs at positions 424 and 428. Residues 425–436 show a composition bias toward polar residues; that stretch reads VPSSPHTEAIQH. The segment covering 437–449 has biased composition (low complexity); the sequence is SSVSTSNGVSSTS. Residues 457–470 are compositionally biased toward polar residues; the sequence is SVLTQMADQSTEPA. Phosphoserine; by ATM is present on residues S472 and S480. Residues 478-487 are compositionally biased toward polar residues; it reads PSSQAQPSGS.

Belongs to the bZIP family. ATF subfamily. As to quaternary structure, binds DNA as a dimer and can form a homodimer in the absence of DNA. Can form a heterodimer with JUN. Heterodimerization is essential for its transcriptional activity. Interacts with SMAD3 and SMAD4. Binds through its N-terminal region to UTF1 which acts as a coactivator of ATF2 transcriptional activity. Interacts with the HK1/VDAC1 complex. Interacts with NBN, MRE11, XPO1, KAT5 and CUL3. Phosphorylation of Thr-51 by MAPK14 and MAPK11, and at Thr-53 by MAPK1/ERK2, MAPK3/ERK1, MAPK11, MAPK12 and MAPK14 in response to external stimulus like insulin causes increased transcriptional activity. Phosphorylated by PLK3 following hyperosmotic stress. Also phosphorylated and activated by JNK and CaMK4. ATM-mediated phosphorylation at Ser-472 and Ser-480 stimulates its function in DNA damage response. Phosphorylation at Ser-44, Thr-55 and Ser-103 activates its transcriptional activity. Phosphorylation at Thr-51 or Thr-53 enhances acetylation of histones H2B and H4.

The protein resides in the nucleus. It is found in the cytoplasm. Its subcellular location is the mitochondrion outer membrane. Its function is as follows. Transcriptional activator which regulates the transcription of various genes, including those involved in anti-apoptosis, cell growth, and DNA damage response. Dependent on its binding partner, binds to CRE (cAMP response element) consensus sequences (5'-TGACGTCA-3') or to AP-1 (activator protein 1) consensus sequences (5'-TGACTCA-3'). In the nucleus, contributes to global transcription and the DNA damage response, in addition to specific transcriptional activities that are related to cell development, proliferation and death. In the cytoplasm, interacts with and perturbs HK1- and VDAC1-containing complexes at the mitochondrial outer membrane, thereby impairing mitochondrial membrane potential, inducing mitochondrial leakage and promoting cell death. The phosphorylated form (mediated by ATM) plays a role in the DNA damage response and is involved in the ionizing radiation (IR)-induced S phase checkpoint control and in the recruitment of the MRN complex into the IR-induced foci (IRIF). Exhibits histone acetyltransferase (HAT) activity which specifically acetylates histones H2B and H4 in vitro. In concert with CUL3 and RBX1, promotes the degradation of KAT5 thereby attenuating its ability to acetylate and activate ATM. Can elicit oncogenic or tumor suppressor activities depending on the tissue or cell type. The sequence is that of Cyclic AMP-dependent transcription factor ATF-2 (Atf2) from Rattus norvegicus (Rat).